The sequence spans 253 residues: MKLNVSFPATGCQKLFEVVDEHKLRIFYEKRMGAEVEADQLGDEWKGYVLRIAGGNDKQGFPMKQGVLTNSRVRLLMSKGHSCYRPRRDGERKRKSVRGCIVDANLSVLALVIVRKGEQEIPGLTDGNVPRRLGPKRASKIRKLFNLSKEDDVRRYVVKRLLPAKEGKENAKPRYKAPKIQRLVTPVVLQRRRHRLALKKKRLAKRKQSENDYAKLLAQRKKESKVRRQEELKRRRSASMRDSKSSDKSAPQK.

The interval 200-253 is disordered; the sequence is KKRLAKRKQSENDYAKLLAQRKKESKVRRQEELKRRRSASMRDSKSSDKSAPQK. Residues 226 to 247 are compositionally biased toward basic and acidic residues; it reads VRRQEELKRRRSASMRDSKSSD.

The protein belongs to the eukaryotic ribosomal protein eS6 family. As to quaternary structure, component of the small ribosomal subunit. Part of the small subunit (SSU) processome, composed of more than 70 proteins and the RNA chaperone small nucleolar RNA (snoRNA) U3. Ribosomal protein S6 is the major substrate of protein kinases in eukaryote ribosomes.

It localises to the cytoplasm. It is found in the nucleus. The protein resides in the nucleolus. Functionally, component of the 40S small ribosomal subunit. Plays an important role in controlling cell growth and proliferation through the selective translation of particular classes of mRNA. Part of the small subunit (SSU) processome, first precursor of the small eukaryotic ribosomal subunit. During the assembly of the SSU processome in the nucleolus, many ribosome biogenesis factors, an RNA chaperone and ribosomal proteins associate with the nascent pre-rRNA and work in concert to generate RNA folding, modifications, rearrangements and cleavage as well as targeted degradation of pre-ribosomal RNA by the RNA exosome. In Spodoptera frugiperda (Fall armyworm), this protein is Small ribosomal subunit protein eS6 (RpS6).